The sequence spans 64 residues: Large ribosomal subunit protein bL35 (64 aa).

The span at 1–26 shows a compositional bias: basic residues; that stretch reads MPKMKTKSAAAKRFKTTKSGKIKRKQ. Positions 1-46 are disordered; it reads MPKMKTKSAAAKRFKTTKSGKIKRKQAYTSHLAPNKTTKQKRHLRK.

This sequence belongs to the bacterial ribosomal protein bL35 family.

The protein is Large ribosomal subunit protein bL35 of Mycoplasmoides gallisepticum (strain R(low / passage 15 / clone 2)) (Mycoplasma gallisepticum).